The following is a 545-amino-acid chain: Chaperonin GroEL 2 (545 aa).

ATP contacts are provided by residues threonine 29–proline 32, aspartate 86–threonine 90, glycine 413, asparagine 479–alanine 481, and aspartate 495.

Belongs to the chaperonin (HSP60) family. Forms a cylinder of 14 subunits composed of two heptameric rings stacked back-to-back. Interacts with the co-chaperonin GroES.

The protein resides in the cytoplasm. It carries out the reaction ATP + H2O + a folded polypeptide = ADP + phosphate + an unfolded polypeptide.. In terms of biological role, together with its co-chaperonin GroES, plays an essential role in assisting protein folding. The GroEL-GroES system forms a nano-cage that allows encapsulation of the non-native substrate proteins and provides a physical environment optimized to promote and accelerate protein folding. This is Chaperonin GroEL 2 from Prochlorococcus marinus (strain AS9601).